The primary structure comprises 427 residues: Serine--tRNA ligase (427 aa).

229–231 serves as a coordination point for L-serine; sequence TAE. Residue 260 to 262 coordinates ATP; that stretch reads RSE. Glu283 contacts L-serine. 347-350 contributes to the ATP binding site; it reads EISS. Ser383 contributes to the L-serine binding site.

Belongs to the class-II aminoacyl-tRNA synthetase family. Type-1 seryl-tRNA synthetase subfamily. In terms of assembly, homodimer. The tRNA molecule binds across the dimer.

The protein resides in the cytoplasm. It carries out the reaction tRNA(Ser) + L-serine + ATP = L-seryl-tRNA(Ser) + AMP + diphosphate + H(+). The catalysed reaction is tRNA(Sec) + L-serine + ATP = L-seryl-tRNA(Sec) + AMP + diphosphate + H(+). The protein operates within aminoacyl-tRNA biosynthesis; selenocysteinyl-tRNA(Sec) biosynthesis; L-seryl-tRNA(Sec) from L-serine and tRNA(Sec): step 1/1. Its function is as follows. Catalyzes the attachment of serine to tRNA(Ser). Is also able to aminoacylate tRNA(Sec) with serine, to form the misacylated tRNA L-seryl-tRNA(Sec), which will be further converted into selenocysteinyl-tRNA(Sec). In Nitrosococcus oceani (strain ATCC 19707 / BCRC 17464 / JCM 30415 / NCIMB 11848 / C-107), this protein is Serine--tRNA ligase.